The primary structure comprises 158 residues: Protein Smg homolog (158 aa).

Belongs to the Smg family.

The polypeptide is Protein Smg homolog (Coxiella burnetii (strain Dugway 5J108-111)).